A 139-amino-acid chain; its full sequence is Large ribosomal subunit protein bL9m (139 aa).

The disordered stretch occupies residues 83–121 (DHQQLSKRHETEVQKNMELRKESVFGHKKEEKPKEEKKG).

Belongs to the bacterial ribosomal protein bL9 family. Component of the mitochondrial large ribosomal subunit (mt-LSU). Mature yeast 74S mitochondrial ribosomes consist of a small (37S) and a large (54S) subunit. The 37S small subunit contains a 15S ribosomal RNA (15S mt-rRNA) and 34 different proteins. The 54S large subunit contains a 21S rRNA (21S mt-rRNA) and 46 different proteins.

It is found in the mitochondrion. Component of the mitochondrial ribosome (mitoribosome), a dedicated translation machinery responsible for the synthesis of mitochondrial genome-encoded proteins, including at least some of the essential transmembrane subunits of the mitochondrial respiratory chain. The mitoribosomes are attached to the mitochondrial inner membrane and translation products are cotranslationally integrated into the membrane. In Saccharomyces cerevisiae (strain ATCC 204508 / S288c) (Baker's yeast), this protein is Large ribosomal subunit protein bL9m (MRPL50).